The following is a 765-amino-acid chain: Spastin (765 aa).

Residues 1 to 94 (MVRTKNQSSS…TSGYGPRGGT (94 aa)) form a disordered region. At 1–107 (MVRTKNQSSS…KQNLYVVSFP (107 aa)) the chain is on the cytoplasmic side. The segment at 1–195 (MVRTKNQSSS…ALLPLEMATN (195 aa)) is required for localization to punctate cytoplasmic foci. The span at 8-19 (SSSSSASSSTKS) shows a compositional bias: low complexity. The segment covering 48–58 (SSKLSSNRQRA) has biased composition (polar residues). A compositionally biased stretch (low complexity) spans 59–72 (TITTTTTSTTPGSS). An intramembrane region (helical) is located at residues 108–128 (IIFLFNVLRSLIYQLFCIFRY). Residues 129-765 (LYCASTKVIY…WSQDYGDITI (637 aa)) are Cytoplasmic-facing. The tract at residues 193–765 (ATNRGGSGGY…WSQDYGDITI (573 aa)) is sufficient for interaction with microtubules and microtubule severing. The 76-residue stretch at 218-293 (HRRAFEYISK…SMARDRLHFL (76 aa)) folds into the MIT domain. The disordered stretch occupies residues 329–462 (QTNSKAAAVE…GSGSGASTPM (134 aa)). Positions 355-364 (SGTGSSAGTS) are enriched in low complexity. Composition is skewed to polar residues over residues 389-407 (NKSQTLPRNLGSKTTSTSV) and 428-444 (QFSSGRNTPPQRSRTPI). The segment at 446–462 (NNAASGSGSGSGASTPM) is required for interaction with microtubules. Position 530 to 537 (530 to 537 (GPPGNGKT)) interacts with ATP.

The protein belongs to the AAA ATPase family. Spastin subfamily. In terms of assembly, homohexamer. The homohexamer is stabilized by ATP-binding. The homohexamer may adopt a ring conformation through which microtubules pass prior to being severed. Interacts with microtubules. Interacts with atl; may be involved in microtubule dynamics.

The protein localises to the membrane. Its subcellular location is the cytoplasm. The protein resides in the cytoskeleton. It localises to the microtubule organizing center. It is found in the centrosome. The protein localises to the chromosome. Its subcellular location is the lipid droplet. The catalysed reaction is n ATP + n H2O + a microtubule = n ADP + n phosphate + (n+1) alpha/beta tubulin heterodimers.. ATP-dependent microtubule severing protein. Stimulates microtubule minus-end depolymerization and poleward microtubule flux in the mitotic spindle. Regulates microtubule stability in the neuromuscular junction synapse. Involved in lipid metabolism by regulating the size and distribution of lipid droplets. Involved in axon regeneration by regulating microtubule severing. This is Spastin from Drosophila mojavensis (Fruit fly).